Reading from the N-terminus, the 179-residue chain is Transcription factor 21 (179 aa).

The tract at residues 23-87 is disordered; the sequence is IKLDPNKEFG…QVQRNAANAR (65 aa). Positions 34–46 are enriched in polar residues; the sequence is SNDSNEESSTCDN. The span at 50–64 shows a compositional bias: basic residues; it reads KKGRGTSGKRRKAPS. Residues 70-80 show a composition bias toward polar residues; sequence GNINQEGKQVQ. Residues 79-131 form the bHLH domain; that stretch reads VQRNAANARERARMRVLSKAFSRLKTTLPWVPPDTKLSKLDTLRLASSYIAHL.

Efficient DNA binding requires dimerization with another bHLH protein.

The protein localises to the nucleus. In terms of biological role, involved in epithelial-mesenchymal interactions in kidney and lung morphogenesis that include epithelial differentiation and branching morphogenesis. The protein is Transcription factor 21 (tcf21) of Xenopus tropicalis (Western clawed frog).